A 105-amino-acid chain; its full sequence is Vacuolar ATPase assembly integral membrane protein VMA21 homolog (105 aa).

The segment at 1–26 is disordered; the sequence is MSTKNKKAAGGNGGAPKQTRQQSHDS. The Cytoplasmic segment spans residues 1–36; it reads MSTKNKKAAGGNGGAPKQTRQQSHDSQDYSSFKTVL. The chain crosses the membrane as a helical span at residues 37-57; sequence FYCMLIVFLPVLTFFVLKGFV. Residues 58–68 are Lumenal-facing; the sequence is LDQFLDISEVK. A helical membrane pass occupies residues 69–89; sequence VNIASAVGAVVALHIALGLYI. The Cytoplasmic portion of the chain corresponds to 90–105; the sequence is YRAYFGAPGSKGSKTD.

It belongs to the VMA21 family.

It localises to the endoplasmic reticulum membrane. The protein localises to the endoplasmic reticulum-Golgi intermediate compartment membrane. It is found in the cytoplasmic vesicle. The protein resides in the COPII-coated vesicle membrane. Functionally, required for the assembly of the V0 complex of the vacuolar ATPase (V-ATPase) in the endoplasmic reticulum. This Drosophila simulans (Fruit fly) protein is Vacuolar ATPase assembly integral membrane protein VMA21 homolog.